The primary structure comprises 837 residues: Periplasmic nitrate reductase (837 aa).

The segment at residues 1-33 (MTTPKLDRRQVLKLEAAAMAALAGGIAMPAAAA) is a signal peptide (tat-type signal). The 4Fe-4S Mo/W bis-MGD-type domain maps to 44 to 100 (LKWDKAACRFCGTGCSVMVATKENRVVATHGDTKSEVNRGLNCVKGYFLSKIMYGHD). Residues C51, C54, C58, and C86 each contribute to the [4Fe-4S] cluster site. Mo-bis(molybdopterin guanine dinucleotide) contacts are provided by residues K88, Q155, N180, C184, 217-224 (WGSNMAEM), 248-252 (STFEH), 267-269 (QTD), M378, Q382, N488, 514-515 (SD), K537, D564, and 724-733 (TGRVLEHWHS). W800 contacts substrate. 2 residues coordinate Mo-bis(molybdopterin guanine dinucleotide): N808 and K825.

The protein belongs to the prokaryotic molybdopterin-containing oxidoreductase family. NasA/NapA/NarB subfamily. In terms of assembly, component of the periplasmic nitrate reductase NapAB complex composed of NapA and NapB. The cofactor is [4Fe-4S] cluster. Mo-bis(molybdopterin guanine dinucleotide) serves as cofactor. Post-translationally, predicted to be exported by the Tat system. The position of the signal peptide cleavage has not been experimentally proven.

It is found in the periplasm. It carries out the reaction 2 Fe(II)-[cytochrome] + nitrate + 2 H(+) = 2 Fe(III)-[cytochrome] + nitrite + H2O. Its function is as follows. Catalytic subunit of the periplasmic nitrate reductase complex NapAB. Receives electrons from NapB and catalyzes the reduction of nitrate to nitrite. This chain is Periplasmic nitrate reductase, found in Rhodopseudomonas palustris (strain BisB18).